The following is a 292-amino-acid chain: Probable septum site-determining protein MinC (292 aa).

A disordered region spans residues 109 to 188 (QVIDTAPPND…PQSSSALVIT (80 aa)). Residues 140 to 150 (QDDEADGEQAD) show a composition bias toward acidic residues. Over residues 171-185 (ANRPTATPPQSSSAL) the composition is skewed to polar residues.

Belongs to the MinC family. Interacts with MinD and FtsZ.

Functionally, cell division inhibitor that blocks the formation of polar Z ring septums. Rapidly oscillates between the poles of the cell to destabilize FtsZ filaments that have formed before they mature into polar Z rings. Prevents FtsZ polymerization. The sequence is that of Probable septum site-determining protein MinC from Bordetella pertussis (strain Tohama I / ATCC BAA-589 / NCTC 13251).